Reading from the N-terminus, the 96-residue chain is Evasin P1078 (96 aa).

An N-terminal signal peptide occupies residues 1 to 28 (MAFNTITFLQWAVFVAILFNMNLHSASA). Disulfide bonds link cysteine 48–cysteine 67, cysteine 52–cysteine 69, and cysteine 63–cysteine 80. An N-linked (GlcNAc...) asparagine glycan is attached at asparagine 51. Asparagine 74 is a glycosylation site (N-linked (GlcNAc...) asparagine).

It localises to the secreted. Its function is as follows. Salivary chemokine-binding protein which binds to host chemokines CXCL1, CXCL2, CXCL3, CXCL5, CXCL6, CXCL11 and CXCL13. In Ixodes ricinus (Common tick), this protein is Evasin P1078.